Consider the following 897-residue polypeptide: Protein translocase subunit SecA (897 aa).

Residues Q87, 105 to 109 (GEGKT), and D512 contribute to the ATP site. The interval 846-897 (EEEQQKQARKKMVFNLVDEDETSEPSKSKKLAGRNEPCPCGSGKKYKKCCGK) is disordered. Positions 883, 885, 894, and 895 each coordinate Zn(2+).

Belongs to the SecA family. In terms of assembly, monomer and homodimer. Part of the essential Sec protein translocation apparatus which comprises SecA, SecYEG and auxiliary proteins SecDF-YajC and YidC. Zn(2+) is required as a cofactor.

The protein resides in the cell inner membrane. The protein localises to the cytoplasm. The enzyme catalyses ATP + H2O + cellular proteinSide 1 = ADP + phosphate + cellular proteinSide 2.. In terms of biological role, part of the Sec protein translocase complex. Interacts with the SecYEG preprotein conducting channel. Has a central role in coupling the hydrolysis of ATP to the transfer of proteins into and across the cell membrane, serving as an ATP-driven molecular motor driving the stepwise translocation of polypeptide chains across the membrane. This chain is Protein translocase subunit SecA, found in Geobacter sulfurreducens (strain ATCC 51573 / DSM 12127 / PCA).